The primary structure comprises 251 residues: MTLAVRVIPCLDVDNGRVVKGVNFQNLRDAGDPVEMAKVYDAEGADELTFLDITASSGNRETTYDVVRRTAEQVFIPLTVGGGVRTPDDVDKLLRAGADKVGVNTAAIARPELIREIAERFGRQVLVLSVDARRTESGSFEVTTHGGRKGTGIDAVEWAHRAAELGAGEILLNSMDADGTKDGYDLEMIAAVRAHVTVPVIASGGAGKLDHFPPAIAAGADAVLAASVFHFGDLRIGEVKETLRAAGHPVR.

Residues Asp-12 and Asp-131 contribute to the active site.

Belongs to the HisA/HisF family. As to quaternary structure, heterodimer of HisH and HisF.

It is found in the cytoplasm. It catalyses the reaction 5-[(5-phospho-1-deoxy-D-ribulos-1-ylimino)methylamino]-1-(5-phospho-beta-D-ribosyl)imidazole-4-carboxamide + L-glutamine = D-erythro-1-(imidazol-4-yl)glycerol 3-phosphate + 5-amino-1-(5-phospho-beta-D-ribosyl)imidazole-4-carboxamide + L-glutamate + H(+). It participates in amino-acid biosynthesis; L-histidine biosynthesis; L-histidine from 5-phospho-alpha-D-ribose 1-diphosphate: step 5/9. In terms of biological role, IGPS catalyzes the conversion of PRFAR and glutamine to IGP, AICAR and glutamate. The HisF subunit catalyzes the cyclization activity that produces IGP and AICAR from PRFAR using the ammonia provided by the HisH subunit. In Streptomyces avermitilis (strain ATCC 31267 / DSM 46492 / JCM 5070 / NBRC 14893 / NCIMB 12804 / NRRL 8165 / MA-4680), this protein is Imidazole glycerol phosphate synthase subunit HisF.